Consider the following 1270-residue polypeptide: ATP-dependent helicase/nuclease subunit A (1270 aa).

The UvrD-like helicase ATP-binding domain maps to 3–476; sequence TKWTEEQELA…IMLYKNFRSR (474 aa). 24–31 contributes to the ATP binding site; sequence AAAGSGKT. One can recognise a UvrD-like helicase C-terminal domain in the interval 528 to 823; sequence IENLKVAGDI…RIMSIHKSKG (296 aa).

It belongs to the helicase family. AddA subfamily. In terms of assembly, heterodimer of AddA and AddB/RexB. Mg(2+) serves as cofactor.

The catalysed reaction is Couples ATP hydrolysis with the unwinding of duplex DNA by translocating in the 3'-5' direction.. The enzyme catalyses ATP + H2O = ADP + phosphate + H(+). Its function is as follows. The heterodimer acts as both an ATP-dependent DNA helicase and an ATP-dependent, dual-direction single-stranded exonuclease. Recognizes the chi site generating a DNA molecule suitable for the initiation of homologous recombination. The AddA nuclease domain is required for chi fragment generation; this subunit has the helicase and 3' -&gt; 5' nuclease activities. The protein is ATP-dependent helicase/nuclease subunit A of Clostridium perfringens (strain SM101 / Type A).